The primary structure comprises 206 residues: Proteasome subunit beta type-2 (206 aa).

This sequence belongs to the peptidase T1B family. In terms of assembly, the 26S proteasome consists of a 20S proteasome core and two 19S regulatory subunits. The 20S proteasome core is composed of 28 subunits that are arranged in four stacked rings, resulting in a barrel-shaped structure. The two end rings are each formed by seven alpha subunits, and the two central rings are each formed by seven beta subunits. The catalytic chamber with the active sites is on the inside of the barrel.

The protein localises to the cytoplasm. It localises to the nucleus. Its function is as follows. Non-catalytic component of the proteasome, a multicatalytic proteinase complex which is characterized by its ability to cleave peptides with Arg, Phe, Tyr, Leu, and Glu adjacent to the leaving group at neutral or slightly basic pH. The proteasome has an ATP-dependent proteolytic activity. This chain is Proteasome subunit beta type-2 (PSB4), found in Trypanosoma brucei brucei.